The following is a 345-amino-acid chain: Uroporphyrinogen decarboxylase (345 aa).

Substrate is bound by residues 27-31, F46, D76, Y152, S207, and H321; that span reads RQAGR.

The protein belongs to the uroporphyrinogen decarboxylase family. As to quaternary structure, homodimer.

The protein resides in the cytoplasm. The catalysed reaction is uroporphyrinogen III + 4 H(+) = coproporphyrinogen III + 4 CO2. Its pathway is porphyrin-containing compound metabolism; protoporphyrin-IX biosynthesis; coproporphyrinogen-III from 5-aminolevulinate: step 4/4. Catalyzes the decarboxylation of four acetate groups of uroporphyrinogen-III to yield coproporphyrinogen-III. The sequence is that of Uroporphyrinogen decarboxylase from Staphylococcus aureus (strain USA300 / TCH1516).